A 72-amino-acid polypeptide reads, in one-letter code: Translation initiation factor IF-1 (72 aa).

The region spanning 1–72 (MAKEDMIEVE…TRGRITYRFK (72 aa)) is the S1-like domain.

This sequence belongs to the IF-1 family. As to quaternary structure, component of the 30S ribosomal translation pre-initiation complex which assembles on the 30S ribosome in the order IF-2 and IF-3, IF-1 and N-formylmethionyl-tRNA(fMet); mRNA recruitment can occur at any time during PIC assembly.

The protein resides in the cytoplasm. Its function is as follows. One of the essential components for the initiation of protein synthesis. Stabilizes the binding of IF-2 and IF-3 on the 30S subunit to which N-formylmethionyl-tRNA(fMet) subsequently binds. Helps modulate mRNA selection, yielding the 30S pre-initiation complex (PIC). Upon addition of the 50S ribosomal subunit IF-1, IF-2 and IF-3 are released leaving the mature 70S translation initiation complex. The protein is Translation initiation factor IF-1 of Enterococcus faecalis (strain ATCC 700802 / V583).